We begin with the raw amino-acid sequence, 251 residues long: Pyrroloquinoline-quinone synthase (251 aa).

The protein belongs to the PqqC family.

It carries out the reaction 6-(2-amino-2-carboxyethyl)-7,8-dioxo-1,2,3,4,7,8-hexahydroquinoline-2,4-dicarboxylate + 3 O2 = pyrroloquinoline quinone + 2 H2O2 + 2 H2O + H(+). The protein operates within cofactor biosynthesis; pyrroloquinoline quinone biosynthesis. Its function is as follows. Ring cyclization and eight-electron oxidation of 3a-(2-amino-2-carboxyethyl)-4,5-dioxo-4,5,6,7,8,9-hexahydroquinoline-7,9-dicarboxylic-acid to PQQ. The protein is Pyrroloquinoline-quinone synthase of Pseudomonas putida (strain GB-1).